A 101-amino-acid polypeptide reads, in one-letter code: Small ribosomal subunit protein uS14 (101 aa).

It belongs to the universal ribosomal protein uS14 family. As to quaternary structure, part of the 30S ribosomal subunit. Contacts proteins S3 and S10.

Binds 16S rRNA, required for the assembly of 30S particles and may also be responsible for determining the conformation of the 16S rRNA at the A site. This Blochmanniella pennsylvanica (strain BPEN) protein is Small ribosomal subunit protein uS14.